The following is a 154-amino-acid chain: Cyanate hydratase (154 aa).

Residues Arg100, Glu103, and Ser126 contribute to the active site.

Belongs to the cyanase family.

It carries out the reaction cyanate + hydrogencarbonate + 3 H(+) = NH4(+) + 2 CO2. In terms of biological role, catalyzes the reaction of cyanate with bicarbonate to produce ammonia and carbon dioxide. This Aspergillus fumigatus (strain CBS 144.89 / FGSC A1163 / CEA10) (Neosartorya fumigata) protein is Cyanate hydratase.